A 459-amino-acid polypeptide reads, in one-letter code: Pentatricopeptide repeat-containing protein At1g07740, mitochondrial (459 aa).

The transit peptide at 1 to 20 (MRRRLSSVLINNQCIASQRH) directs the protein to the mitochondrion. Positions 19–41 (RHYHTSRPEKPTKKASSHEPTHK) are disordered. The segment covering 24–41 (SRPEKPTKKASSHEPTHK) has biased composition (basic and acidic residues). PPR repeat units lie at residues 80-114 (DYPS…NVRC), 115-149 (RESL…DCVR), 150-184 (TIQS…RLRP), 185-219 (NSVS…EVQP), 220-254 (SVVT…RIRP), 255-289 (NAVT…GCKP), 290-324 (GLVN…RIKP), 325-359 (DVVI…GCKP), 360-394 (NAAT…RHCP), and 395-429 (TPAT…NLSF).

The protein belongs to the PPR family. P subfamily.

The protein localises to the mitochondrion. The polypeptide is Pentatricopeptide repeat-containing protein At1g07740, mitochondrial (Arabidopsis thaliana (Mouse-ear cress)).